A 406-amino-acid polypeptide reads, in one-letter code: F-box/WD repeat-containing protein mec-15 (406 aa).

An F-box domain is found at 6-53 (PTELISLPSELLCHLFTYLPQRQLITEIPLVCRRFNTILNDDKFWSRR). 5 WD repeats span residues 101-142 (GHSA…NGED), 156-195 (AHSGWIWNMAQESTSTNFYTTSWDSTVKSWHITDNGALQN), 242-279 (LHKRAVIALAVQGDKIFTSGEDRLMMMVDRRNFSKPVL), 281-320 (EYSPTAYKSCLSLQCNQLLTSTSDGKVKLYDANNFNVLQT), and 365-406 (SHEL…DQEN).

As to quaternary structure, may interact with the SCF ubiquitin ligase complex component skr-1. Expressed in several neurons in the head, tail and ventral cord, but absent in touch receptor neurons in adults. Expressed in GABAergic and cholinergic motor neurons.

It localises to the perikaryon. Plays a role in mechanosensory transduction (touch sensitivity), touch receptor neuron development and synapse formation. Regulates expression of the protein snb-1 and the distribution of synaptic vesicles at synapses to promote synaptic transmission at the neuromuscular junctions of GABAergic motor neurons. In Caenorhabditis elegans, this protein is F-box/WD repeat-containing protein mec-15.